Reading from the N-terminus, the 485-residue chain is Rhamnulokinase (485 aa).

8–12 contacts ATP; sequence ASSGR. Substrate is bound by residues Gly78 and 231–233; that span reads HDT. Asp232 acts as the Proton acceptor in catalysis. Thr254 lines the ATP pocket. Residue Asn291 participates in substrate binding. ATP is bound at residue Gln299. Cys348 and Cys365 are joined by a disulfide. Gly397 serves as a coordination point for ATP. An intrachain disulfide couples Cys408 to Cys412.

It belongs to the rhamnulokinase family. The cofactor is Mg(2+).

The enzyme catalyses L-rhamnulose + ATP = L-rhamnulose 1-phosphate + ADP + H(+). The protein operates within carbohydrate degradation; L-rhamnose degradation; glycerone phosphate from L-rhamnose: step 2/3. Functionally, involved in the catabolism of L-rhamnose (6-deoxy-L-mannose). Catalyzes the transfer of the gamma-phosphate group from ATP to the 1-hydroxyl group of L-rhamnulose to yield L-rhamnulose 1-phosphate. The sequence is that of Rhamnulokinase from Yersinia pestis bv. Antiqua (strain Angola).